Consider the following 274-residue polypeptide: Shikimate kinase (274 aa).

Proline 86–alanine 96 is an ATP binding site.

The protein belongs to the GHMP kinase family. Archaeal shikimate kinase subfamily.

The protein resides in the cytoplasm. The enzyme catalyses shikimate + ATP = 3-phosphoshikimate + ADP + H(+). It participates in metabolic intermediate biosynthesis; chorismate biosynthesis; chorismate from D-erythrose 4-phosphate and phosphoenolpyruvate: step 5/7. This Pyrococcus abyssi (strain GE5 / Orsay) protein is Shikimate kinase (aroK).